Here is a 321-residue protein sequence, read N- to C-terminus: Altered inheritance of mitochondria protein 18, mitochondrial (321 aa).

The N-terminal 72 residues, 1–72 (MDRGRCANML…LLATSLYYRD (72 aa)), are a transit peptide targeting the mitochondrion.

This sequence belongs to the AIM18/AIM46 family.

Its subcellular location is the mitochondrion. In Saccharomyces cerevisiae (strain AWRI1631) (Baker's yeast), this protein is Altered inheritance of mitochondria protein 18, mitochondrial (AIM18).